The chain runs to 403 residues: MAPSAISTSPPPTDRVSSSLASYKGYDHVHWYVGNAKQAASYYITRMGFKRIAYRGLETGCRSVCSHVVRNGDITFILTSPLRSLDQVDRFPPEEQELLKEIHAHLEKHGDGVKDVAFEVDSVDSVFYAATNNGAKIVSQPRTLEDDNGQVRVATIQTYGETTHTLVERGSYHGAFLPGYRMETGVEDPISQLLPGVHLNRIDHCVGNQDWDEMDKVCEYYEKALGFHRFWSVDDKQICTEYSALKSIVMASPNEVVKMPINEPAKGKKQSQIEEYVDFYNGAGVQHIALLTDDIIRDITNLKARGVEFIKVPDTYYEDIKVRLKKAGLTLHEDFETIRSLDILIDFDEGGYLLQLFTKHLMDRPTVFIEIIQRHNFSGFGAGNFKSLFEAIEREQALRGNLV.

VOC domains lie at 25–169 and 201–359; these read GYDH…LVER and RIDH…LFTK. Positions 204, 287, and 370 each coordinate Fe cation.

Belongs to the 4HPPD family. In terms of assembly, homodimer. The cofactor is Fe cation.

It carries out the reaction 3-(4-hydroxyphenyl)pyruvate + O2 = homogentisate + CO2. It participates in amino-acid degradation; L-phenylalanine degradation; acetoacetate and fumarate from L-phenylalanine: step 3/6. 4-hydroxyphenylpyruvate dioxygenase; part of the L-tyrosine degradation gene cluster that mediates the biosynthesis of the brownish pigment pyomelanin as an alternative melanin. The 4-hydroxyphenylpyruvate dioxygenase hppD catalyzes the conversion of 4-hydroxyphenylpyruvate to homogentisic acid (HGA). The protein hmgX is crucial for this conversion and thus, probably functions as an accessory factor to mediate specific activity of hppD. The homogentisate 1,2-dioxygenase hmgA is then involved in the cleavage of the aromatic ring of HGA and its conversion to 4-maleylacetoacetate. When hmgA activity is lowered by the cell wall integrity (CWI) signaling pathway, HGA accumulates and leads to the production of pyomelanin through benzoquinone acetic acid after oxidation and polymerization. On the opposite, in non-stress conditions, both hppD and hmgA activities are balanced and HGA is degraded into 4-maleylacetoacetate. 4-maleylacetoacetate is further converted to 4-fumarylacetoacetate by the maleylacetoacetate isomerase maiA, which is degraded into fumarate and acetoacetate by the fumarylacetoacetase fahA. This chain is 4-hydroxyphenylpyruvate dioxygenase, found in Aspergillus fumigatus (strain ATCC MYA-4609 / CBS 101355 / FGSC A1100 / Af293) (Neosartorya fumigata).